A 565-amino-acid chain; its full sequence is Tyrosine-protein phosphatase non-receptor type 5 (565 aa).

The span at 1–16 (MNYEGARSERENHAAD) shows a compositional bias: basic and acidic residues. The disordered stretch occupies residues 1–80 (MNYEGARSER…KPPPRGAGSH (80 aa)). Positions 56–75 (MPPPPPPSPPSDPAQKPPPR) are enriched in pro residues. 2 helical membrane-spanning segments follow: residues 88–108 (LCLFAASQFLLACGVLWFSGY) and 146–166 (LLLVFLSVGLVLVTTLVWHLL). The segment at 169 to 189 (PPEPPTPLPPEDRRQSVSRQP) is disordered. Residue Ser245 is modified to Phosphoserine; by PKA. A Phosphothreonine; by MAPK modification is found at Thr255. The residue at position 268 (Ser268) is a Phosphoserine; by MAPK. Positions 300-555 (LQAEFFEIPM…QFVHHVMSLY (256 aa)) constitute a Tyrosine-protein phosphatase domain. Residues Asp461, 496-502 (CSAGIGR), and Gln540 contribute to the substrate site. The active-site Phosphocysteine intermediate is the Cys496.

It belongs to the protein-tyrosine phosphatase family. Non-receptor class subfamily. Phosphorylation at Ser-245 by PKA deactivates PTPN5. Phosphorylation at Thr-255 and Ser-268 by MAPKs stabilizes the phosphatase, dephosphorylation of these sites results in ubiquitin-mediated degradation of the active phosphatase.

The protein resides in the endoplasmic reticulum membrane. It carries out the reaction O-phospho-L-tyrosyl-[protein] + H2O = L-tyrosyl-[protein] + phosphate. In terms of biological role, may regulate the activity of several effector molecules involved in synaptic plasticity and neuronal cell survival, including MAPKs, Src family kinases and NMDA receptors. The polypeptide is Tyrosine-protein phosphatase non-receptor type 5 (PTPN5) (Homo sapiens (Human)).